Consider the following 285-residue polypeptide: Probable endonuclease 4 (285 aa).

H69, H109, E145, D179, H182, H216, D229, H231, and E261 together coordinate Zn(2+).

This sequence belongs to the AP endonuclease 2 family. Zn(2+) is required as a cofactor.

It catalyses the reaction Endonucleolytic cleavage to 5'-phosphooligonucleotide end-products.. Its function is as follows. Endonuclease IV plays a role in DNA repair. It cleaves phosphodiester bonds at apurinic or apyrimidinic (AP) sites, generating a 3'-hydroxyl group and a 5'-terminal sugar phosphate. The chain is Probable endonuclease 4 from Salmonella paratyphi C (strain RKS4594).